Consider the following 729-residue polypeptide: Fatty acid oxidation complex subunit alpha (729 aa).

Residues 1 to 189 (MLYKGDTLYL…KIGLVDGVVK (189 aa)) are enoyl-CoA hydratase/isomerase. Residue Asp296 participates in substrate binding. The segment at 311–729 (ETPKQAAVLG…ARPVGDLKTA (419 aa)) is 3-hydroxyacyl-CoA dehydrogenase. NAD(+) is bound by residues Met324, Asp343, 400-402 (VVE), Lys407, and Ser429. Residue His450 is the For 3-hydroxyacyl-CoA dehydrogenase activity of the active site. Residue Asn453 participates in NAD(+) binding. Residues Asn500 and Tyr660 each contribute to the substrate site. A disordered region spans residues 708–729 (RHNEPYYPPVEPARPVGDLKTA).

It in the N-terminal section; belongs to the enoyl-CoA hydratase/isomerase family. The protein in the C-terminal section; belongs to the 3-hydroxyacyl-CoA dehydrogenase family. In terms of assembly, heterotetramer of two alpha chains (FadB) and two beta chains (FadA).

It carries out the reaction a (3S)-3-hydroxyacyl-CoA + NAD(+) = a 3-oxoacyl-CoA + NADH + H(+). It catalyses the reaction a (3S)-3-hydroxyacyl-CoA = a (2E)-enoyl-CoA + H2O. The enzyme catalyses a 4-saturated-(3S)-3-hydroxyacyl-CoA = a (3E)-enoyl-CoA + H2O. The catalysed reaction is (3S)-3-hydroxybutanoyl-CoA = (3R)-3-hydroxybutanoyl-CoA. It carries out the reaction a (3Z)-enoyl-CoA = a 4-saturated (2E)-enoyl-CoA. It catalyses the reaction a (3E)-enoyl-CoA = a 4-saturated (2E)-enoyl-CoA. The protein operates within lipid metabolism; fatty acid beta-oxidation. Its function is as follows. Involved in the aerobic and anaerobic degradation of long-chain fatty acids via beta-oxidation cycle. Catalyzes the formation of 3-oxoacyl-CoA from enoyl-CoA via L-3-hydroxyacyl-CoA. It can also use D-3-hydroxyacyl-CoA and cis-3-enoyl-CoA as substrate. The chain is Fatty acid oxidation complex subunit alpha from Escherichia coli O17:K52:H18 (strain UMN026 / ExPEC).